We begin with the raw amino-acid sequence, 943 residues long: Isoleucine--tRNA ligase (943 aa).

The short motif at 58–68 (PYANGKIHIGH) is the 'HIGH' region element. Residue glutamate 567 coordinates L-isoleucyl-5'-AMP. Residues 608-612 (KMSKS) carry the 'KMSKS' region motif. Residue lysine 611 coordinates ATP. Zn(2+)-binding residues include cysteine 906, cysteine 909, cysteine 926, and cysteine 929.

This sequence belongs to the class-I aminoacyl-tRNA synthetase family. IleS type 1 subfamily. As to quaternary structure, monomer. Requires Zn(2+) as cofactor.

Its subcellular location is the cytoplasm. It carries out the reaction tRNA(Ile) + L-isoleucine + ATP = L-isoleucyl-tRNA(Ile) + AMP + diphosphate. Functionally, catalyzes the attachment of isoleucine to tRNA(Ile). As IleRS can inadvertently accommodate and process structurally similar amino acids such as valine, to avoid such errors it has two additional distinct tRNA(Ile)-dependent editing activities. One activity is designated as 'pretransfer' editing and involves the hydrolysis of activated Val-AMP. The other activity is designated 'posttransfer' editing and involves deacylation of mischarged Val-tRNA(Ile). The chain is Isoleucine--tRNA ligase from Pseudomonas putida (strain W619).